The primary structure comprises 526 residues: Bifunctional purine biosynthesis protein PurH (526 aa).

Positions 1–147 (MSVIKRALIS…KNWKHVAIVT (147 aa)) constitute an MGS-like domain.

The protein belongs to the PurH family.

It carries out the reaction (6R)-10-formyltetrahydrofolate + 5-amino-1-(5-phospho-beta-D-ribosyl)imidazole-4-carboxamide = 5-formamido-1-(5-phospho-D-ribosyl)imidazole-4-carboxamide + (6S)-5,6,7,8-tetrahydrofolate. It catalyses the reaction IMP + H2O = 5-formamido-1-(5-phospho-D-ribosyl)imidazole-4-carboxamide. The protein operates within purine metabolism; IMP biosynthesis via de novo pathway; 5-formamido-1-(5-phospho-D-ribosyl)imidazole-4-carboxamide from 5-amino-1-(5-phospho-D-ribosyl)imidazole-4-carboxamide (10-formyl THF route): step 1/1. Its pathway is purine metabolism; IMP biosynthesis via de novo pathway; IMP from 5-formamido-1-(5-phospho-D-ribosyl)imidazole-4-carboxamide: step 1/1. The protein is Bifunctional purine biosynthesis protein PurH of Neisseria gonorrhoeae (strain NCCP11945).